A 309-amino-acid polypeptide reads, in one-letter code: tRNA dimethylallyltransferase (309 aa).

Position 14 to 21 (14 to 21 (GPTASGKS)) interacts with ATP. 16–21 (TASGKS) provides a ligand contact to substrate. The interaction with substrate tRNA stretch occupies residues 39-42 (DSMQ).

This sequence belongs to the IPP transferase family. In terms of assembly, monomer. Mg(2+) serves as cofactor.

The enzyme catalyses adenosine(37) in tRNA + dimethylallyl diphosphate = N(6)-dimethylallyladenosine(37) in tRNA + diphosphate. Its function is as follows. Catalyzes the transfer of a dimethylallyl group onto the adenine at position 37 in tRNAs that read codons beginning with uridine, leading to the formation of N6-(dimethylallyl)adenosine (i(6)A). This is tRNA dimethylallyltransferase from Geobacter metallireducens (strain ATCC 53774 / DSM 7210 / GS-15).